We begin with the raw amino-acid sequence, 117 residues long: Immunoglobulin heavy variable 3-48 (117 aa).

Positions 1 to 19 (MELGLCWVFLVAILEGVQC) are cleaved as a signal peptide. Residues 20–44 (EVQLVESGGGLVQPGGSLRLSCAAS) are framework-1. Positions 20-117 (EVQLVESGGG…EDTAVYYCAR (98 aa)) constitute an Ig-like domain. A disulfide bond links C41 and C115. The segment at 45–52 (GFTFSSYE) is complementarity-determining-1. The tract at residues 53–69 (MNWVRQAPGKGLEWVSY) is framework-2. Residues 70-77 (ISSSGSTI) are complementarity-determining-2. Residues 78–115 (YYADSVKGRFTISRDNAKNSLYLQMNSLRAEDTAVYYC) are framework-3. The interval 116–117 (AR) is complementarity-determining-3.

As to quaternary structure, immunoglobulins are composed of two identical heavy chains and two identical light chains; disulfide-linked. In terms of processing, the N-terminus is blocked.

Its subcellular location is the secreted. The protein resides in the cell membrane. Functionally, v region of the variable domain of immunoglobulin heavy chains that participates in the antigen recognition. Immunoglobulins, also known as antibodies, are membrane-bound or secreted glycoproteins produced by B lymphocytes. In the recognition phase of humoral immunity, the membrane-bound immunoglobulins serve as receptors which, upon binding of a specific antigen, trigger the clonal expansion and differentiation of B lymphocytes into immunoglobulins-secreting plasma cells. Secreted immunoglobulins mediate the effector phase of humoral immunity, which results in the elimination of bound antigens. The antigen binding site is formed by the variable domain of one heavy chain, together with that of its associated light chain. Thus, each immunoglobulin has two antigen binding sites with remarkable affinity for a particular antigen. The variable domains are assembled by a process called V-(D)-J rearrangement and can then be subjected to somatic hypermutations which, after exposure to antigen and selection, allow affinity maturation for a particular antigen. This Homo sapiens (Human) protein is Immunoglobulin heavy variable 3-48.